Reading from the N-terminus, the 135-residue chain is Transcription antitermination protein NusB (135 aa).

The protein belongs to the NusB family.

In terms of biological role, involved in transcription antitermination. Required for transcription of ribosomal RNA (rRNA) genes. Binds specifically to the boxA antiterminator sequence of the ribosomal RNA (rrn) operons. This is Transcription antitermination protein NusB from Shewanella pealeana (strain ATCC 700345 / ANG-SQ1).